The following is a 467-amino-acid chain: Uronate isomerase (467 aa).

Belongs to the metallo-dependent hydrolases superfamily. Uronate isomerase family.

It catalyses the reaction D-glucuronate = D-fructuronate. The enzyme catalyses aldehydo-D-galacturonate = keto-D-tagaturonate. The protein operates within carbohydrate metabolism; pentose and glucuronate interconversion. This is Uronate isomerase from Actinobacillus succinogenes (strain ATCC 55618 / DSM 22257 / CCUG 43843 / 130Z).